The chain runs to 454 residues: Inner membrane permease YgbN (454 aa).

Position 1 (Met1) is a topological domain, periplasmic. Residues 2–22 (STITLLCIALAGVIMLLLLVI) traverse the membrane as a helical segment. Over 23-27 (KAKVQ) the chain is Cytoplasmic. Residues 28 to 48 (PFVALLLVSLLVALAAGIPAG) form a helical membrane-spanning segment. Topologically, residues 49–52 (EVGK) are periplasmic. A helical transmembrane segment spans residues 53–73 (VMIAGMGGVLGSVTIIIGLGA). The Cytoplasmic segment spans residues 74–108 (MLGRMIEHSGGAESLANYFSRKLGDKRTIAALTLA). A helical membrane pass occupies residues 109–129 (AFFLGIPVFFDVGFIILAPII). Over 130–137 (YGFAKVAK) the chain is Periplasmic. The helical transmembrane segment at 138-158 (ISPLKFGLPVAGIMLTVHVAV) threads the bilayer. The Cytoplasmic portion of the chain corresponds to 159–174 (PPHPGPVAAAGLLHAD). Residues 175-195 (IGWLTIIGIAISIPVGVVGYF) form a helical membrane-spanning segment. Over 196 to 235 (AAKIINKRQYAMSVEVLEQMQLAPASEEGATKLSDKINPP) the chain is Periplasmic. Residues 236–256 (GVALVTSLIVIPIAIIMAGTV) form a helical membrane-spanning segment. Over 257-273 (SATLMPPSHPLLGTLQL) the chain is Cytoplasmic. A helical membrane pass occupies residues 274–294 (IGSPMVALMIALVLAFWLLAL). Topologically, residues 295–305 (RRGWSLQHTSD) are periplasmic. A helical transmembrane segment spans residues 306 to 326 (IMGSALPTAAVVILVTGAGGV). Residues 327-341 (FGKVLVESGVGKALA) are Cytoplasmic-facing. Residues 342–362 (NMLQMIDLPLLPAAFIISLAL) form a helical membrane-spanning segment. At 363-383 (RASQGSATVAILTTGGLLSEA) the chain is on the periplasmic side. Residues 384–404 (VMGLNPIQCVLVTLAACFGGL) traverse the membrane as a helical segment. The Cytoplasmic portion of the chain corresponds to 405-433 (GASHINDSGFWIVTKYLGLSVADGLKTWT). The chain crosses the membrane as a helical span at residues 434 to 454 (VLTTILGFTGFLITWCVWAVI).

The protein belongs to the GntP permease family.

It is found in the cell inner membrane. In Escherichia coli (strain K12), this protein is Inner membrane permease YgbN (ygbN).